The following is a 21-amino-acid chain: Ocellatin-4 (21 aa).

Ile-21 bears the Isoleucine amide mark.

As to expression, expressed by the skin dorsal glands.

The protein localises to the secreted. Has hemolytic activity against human erythrocytes (HC50=14.3 uM). Has antibacterial activity against the Gram-positive bacterium S.aureus ATCC 25923 (MIC=64 uM) and the Gram-negative bacterium E.coli ATCC 25922 (MIC=64 uM). The polypeptide is Ocellatin-4 (Leptodactylus ocellatus (Argus frog)).